The following is a 159-amino-acid chain: Ribosomal RNA large subunit methyltransferase H (159 aa).

S-adenosyl-L-methionine is bound by residues leucine 76, glycine 108, and 127 to 132 (FSKMTF).

The protein belongs to the RNA methyltransferase RlmH family. Homodimer.

The protein localises to the cytoplasm. It carries out the reaction pseudouridine(1915) in 23S rRNA + S-adenosyl-L-methionine = N(3)-methylpseudouridine(1915) in 23S rRNA + S-adenosyl-L-homocysteine + H(+). Specifically methylates the pseudouridine at position 1915 (m3Psi1915) in 23S rRNA. The sequence is that of Ribosomal RNA large subunit methyltransferase H from Bifidobacterium longum (strain DJO10A).